Consider the following 148-residue polypeptide: MAHLLLLHGPNLNLLGTREPEVYGRNTLAQIDAALVDRAQAAGHTLDCLQSNAEHVLVERIHAAREDGTAFILINPAAFTHTSVSLRDALLGVGLPFVEIHLSNPHTREPFRHHSYLSDKAAGVICGFGADSYRLALEAVIARLERDS.

The active-site Proton acceptor is Y23. N75, H81, and D88 together coordinate substrate. H101 serves as the catalytic Proton donor. Residues L102–S103 and R112 contribute to the substrate site.

Belongs to the type-II 3-dehydroquinase family. Homododecamer.

The catalysed reaction is 3-dehydroquinate = 3-dehydroshikimate + H2O. It participates in metabolic intermediate biosynthesis; chorismate biosynthesis; chorismate from D-erythrose 4-phosphate and phosphoenolpyruvate: step 3/7. In terms of biological role, catalyzes a trans-dehydration via an enolate intermediate. The polypeptide is 3-dehydroquinate dehydratase (Xanthomonas campestris pv. campestris (strain B100)).